Reading from the N-terminus, the 463-residue chain is Elongation factor 1-alpha (463 aa).

Residues Lys-5–Thr-242 form the tr-type G domain. The segment at Gly-14–Ser-21 is G1. Gly-14–Ser-21 is a GTP binding site. Residues Gly-70–Asp-74 are G2. The G3 stretch occupies residues Asp-91 to Gly-94. Residues Asp-91–His-95 and Asn-153–Asp-156 each bind GTP. A G4 region spans residues Asn-153–Asp-156. The interval Ser-194 to Phe-196 is G5. 2 positions are modified to 5-glutamyl glycerylphosphorylethanolamine: Glu-301 and Glu-374. The disordered stretch occupies residues Lys-443–Lys-463. Positions Gly-446 to Ala-455 are enriched in polar residues.

Belongs to the TRAFAC class translation factor GTPase superfamily. Classic translation factor GTPase family. EF-Tu/EF-1A subfamily.

Its subcellular location is the cytoplasm. This protein promotes the GTP-dependent binding of aminoacyl-tRNA to the A-site of ribosomes during protein biosynthesis. The protein is Elongation factor 1-alpha of Caenorhabditis elegans.